Consider the following 316-residue polypeptide: 4-hydroxyphenylacetate decarboxylase activating enzyme (316 aa).

One can recognise a Radical SAM core domain in the interval 20-307 (HDGPGCRTTV…QDIFLDNGIA (288 aa)). [4Fe-4S] cluster contacts are provided by Cys-34, Cys-38, Cys-41, Cys-60, Cys-66, Cys-69, and Cys-105. 40 to 42 (WCA) contributes to the S-adenosyl-L-methionine binding site. Residues 84–115 (NKPVIDWNICKDCESFECVNSCYYNAFKLCAK) enclose the 4Fe-4S ferredoxin-type domain. S-adenosyl-L-methionine is bound by residues Gly-144, 193-195 (DIK), and His-267.

Belongs to the organic radical-activating enzymes family. As to quaternary structure, monomer. [4Fe-4S] cluster serves as cofactor.

It catalyses the reaction glycyl-[protein] + reduced [flavodoxin] + S-adenosyl-L-methionine = glycin-2-yl radical-[protein] + semiquinone [flavodoxin] + 5'-deoxyadenosine + L-methionine + H(+). In terms of biological role, catalyzes activation of 4-hydroxyphenylacetate decarboxylase under anaerobic conditions by generation of an organic free radical on a glycine residue, via a homolytic cleavage of S-adenosyl-L-methionine (SAM). This is 4-hydroxyphenylacetate decarboxylase activating enzyme from Clostridioides difficile (strain 630) (Peptoclostridium difficile).